The chain runs to 374 residues: Pulmonary surfactant-associated protein D (374 aa).

The first 19 residues, 1-19, serve as a signal peptide directing secretion; it reads MLPFLSMLVLLVQPLGNLG. S-nitrosocysteine occurs at positions 34 and 39. The tract at residues 38–222 is disordered; that stretch reads MCSPTENGLP…GIKGESGLPD (185 aa). Residues 45–221 enclose the Collagen-like domain; the sequence is GLPGRDGRDG…RGIKGESGLP (177 aa). The span at 49 to 64 shows a compositional bias: basic and acidic residues; sequence RDGRDGREGPRGEKGD. The span at 70–79 shows a compositional bias: low complexity; the sequence is PMGLSGLQGP. Asparagine 89 carries N-linked (GlcNAc...) asparagine glycosylation. 2 stretches are compositionally biased toward low complexity: residues 137-149 and 169-200; these read KGEA…VGAP and APGV…RGPP. Basic and acidic residues predominate over residues 203 to 215; sequence KGDRGVPGDRGIK. The stretch at 222–253 forms a coiled coil; the sequence is DSAALRQQMEALKGKLQRLEVAFSHYQKAALF. The 116-residue stretch at 259 to 374 folds into the C-type lectin domain; that stretch reads VGDKIFRTAD…GEQRLVICEF (116 aa). Disulfide bonds link cysteine 280-cysteine 372 and cysteine 350-cysteine 364.

Belongs to the SFTPD family. As to quaternary structure, oligomeric complex of 4 set of homotrimers. S-nitrosylation at Cys-34 and Cys-39 alters the quaternary structure which results in a pro-inflammatory chemoattractive signaling activity with macrophages.

It is found in the secreted. The protein resides in the extracellular space. It localises to the extracellular matrix. Its subcellular location is the surface film. Contributes to the lung's defense against inhaled microorganisms, organic antigens and toxins. Interacts with compounds such as bacterial lipopolysaccharides, oligosaccharides and fatty acids and modulates leukocyte action in immune response. May participate in the extracellular reorganization or turnover of pulmonary surfactant. Binds strongly maltose residues and to a lesser extent other alpha-glucosyl moieties. This is Pulmonary surfactant-associated protein D (Sftpd) from Mus musculus (Mouse).